The sequence spans 270 residues: 5'-AMP-activated protein kinase subunit beta-1 (270 aa).

The tract at residues 1–43 (MGNTSSERAALERQAGHKTPRRDSSGGTKDGDRPKILMDSPED) is disordered. A lipid anchor (N-myristoyl glycine) is attached at G2. T4 bears the Phosphothreonine mark. A phosphoserine mark is found at S5 and S6. Over residues 9–36 (AALERQAGHKTPRRDSSGGTKDGDRPKI) the composition is skewed to basic and acidic residues. Position 19 is a phosphothreonine (T19). 2 positions are modified to phosphoserine; by autocatalysis: S24 and S25. 3 positions are modified to phosphoserine: S40, S96, and S101. Positions 68-163 (EVNEKAPAQA…QVKKTDFEVF (96 aa)) are glycogen-binding domain. A Phosphoserine; by autocatalysis modification is found at S108. T148 is modified (phosphothreonine). Residue S182 is modified to Phosphoserine. Position 201 is an N6-succinyllysine (K201).

This sequence belongs to the 5'-AMP-activated protein kinase beta subunit family. AMPK is a heterotrimer of an alpha catalytic subunit (PRKAA1 or PRKAA2), a beta (PRKAB1 or PRKAB2) and a gamma non-catalytic subunits (PRKAG1, PRKAG2 or PRKAG3). Interacts with FNIP1 and FNIP2. Post-translationally, phosphorylated when associated with the catalytic subunit (PRKAA1 or PRKAA2). Phosphorylated by ULK1; leading to negatively regulate AMPK activity and suggesting the existence of a regulatory feedback loop between ULK1 and AMPK. Highly expressed in kidney, heart, white adipose tissue, lung and spleen.

Non-catalytic subunit of AMP-activated protein kinase (AMPK), an energy sensor protein kinase that plays a key role in regulating cellular energy metabolism. In response to reduction of intracellular ATP levels, AMPK activates energy-producing pathways and inhibits energy-consuming processes: inhibits protein, carbohydrate and lipid biosynthesis, as well as cell growth and proliferation. AMPK acts via direct phosphorylation of metabolic enzymes, and by longer-term effects via phosphorylation of transcription regulators. Also acts as a regulator of cellular polarity by remodeling the actin cytoskeleton; probably by indirectly activating myosin. Beta non-catalytic subunit acts as a scaffold on which the AMPK complex assembles, via its C-terminus that bridges alpha (PRKAA1 or PRKAA2) and gamma subunits (PRKAG1, PRKAG2 or PRKAG3). This is 5'-AMP-activated protein kinase subunit beta-1 (Prkab1) from Rattus norvegicus (Rat).